Consider the following 423-residue polypeptide: POU domain, class 5, transcription factor 1.3 (423 aa).

Residues 85 to 211 (GALSSGDPSP…GSGNEEDGTT (127 aa)) are disordered. The segment covering 94–110 (PEGRNEEDHGSISEERS) has biased composition (basic and acidic residues). Composition is skewed to polar residues over residues 111–120 (SGTPSPNSPM), 156–173 (PQQS…GASN), and 194–203 (PSPNNASFGS). The POU-specific domain occupies 207 to 281 (EDGTTLEEME…LLEQWLGEAE (75 aa)). The segment at residues 301-360 (KRKMRTCFDSVLKGRLEGHFMCNQKPGARELAEIAKELGLEKDVVRVWFCNRRQKEKSKS) is a DNA-binding region (homeobox).

The protein belongs to the POU transcription factor family. Class-5 subfamily. As to quaternary structure, interacts with the transcription factors tcf7l1/tcf3 and vegt.

Its subcellular location is the nucleus. Transcription factor that binds to the octamer motif (5'-ATTTGCAT-3'). Antagonizes the activity of nodal/activin signaling during gastrulation to suppress mesendoderm formation. Acts maternally to inhibit vegt and beta-catenin-activated gene transcription, probably by forming a transcriptional repression complex on the promoters of target genes. Binds to an octamer motif in interspersed RNA. This chain is POU domain, class 5, transcription factor 1.3 (pou5f1.3), found in Xenopus tropicalis (Western clawed frog).